We begin with the raw amino-acid sequence, 305 residues long: UDP-3-O-acyl-N-acetylglucosamine deacetylase (305 aa).

Residues His79, His238, and Asp242 each coordinate Zn(2+). His265 (proton donor) is an active-site residue.

The protein belongs to the LpxC family. Zn(2+) serves as cofactor.

The catalysed reaction is a UDP-3-O-[(3R)-3-hydroxyacyl]-N-acetyl-alpha-D-glucosamine + H2O = a UDP-3-O-[(3R)-3-hydroxyacyl]-alpha-D-glucosamine + acetate. Its pathway is glycolipid biosynthesis; lipid IV(A) biosynthesis; lipid IV(A) from (3R)-3-hydroxytetradecanoyl-[acyl-carrier-protein] and UDP-N-acetyl-alpha-D-glucosamine: step 2/6. Catalyzes the hydrolysis of UDP-3-O-myristoyl-N-acetylglucosamine to form UDP-3-O-myristoylglucosamine and acetate, the committed step in lipid A biosynthesis. In Escherichia fergusonii (strain ATCC 35469 / DSM 13698 / CCUG 18766 / IAM 14443 / JCM 21226 / LMG 7866 / NBRC 102419 / NCTC 12128 / CDC 0568-73), this protein is UDP-3-O-acyl-N-acetylglucosamine deacetylase.